Here is a 226-residue protein sequence, read N- to C-terminus: HTH-type transcriptional regulator TcmR (226 aa).

Residues 1–16 (MDSAETDTPSTRSTPN) show a composition bias toward polar residues. The disordered stretch occupies residues 1–25 (MDSAETDTPSTRSTPNGPGLRQRKL). The HTH tetR-type domain occupies 26-86 (RRTRDQLIRE…TPISAIDEAF (61 aa)). The H-T-H motif DNA-binding region spans 49-68 (TVEQIAEAVEVHPRTFFRHF).

It participates in antibiotic biosynthesis; tetracenomycin C biosynthesis. In terms of biological role, represses transcription of the divergently oriented tcmR and tcmA (tetracenomycin C resistance and export) genes by binding to an intergenic operator region. This binding is inhibited by tetracenomycin C. The polypeptide is HTH-type transcriptional regulator TcmR (tcmR) (Streptomyces glaucescens).